A 130-amino-acid chain; its full sequence is Transcription antitermination protein NusB (130 aa).

Belongs to the NusB family.

In terms of biological role, involved in transcription antitermination. Required for transcription of ribosomal RNA (rRNA) genes. Binds specifically to the boxA antiterminator sequence of the ribosomal RNA (rrn) operons. The protein is Transcription antitermination protein NusB of Bacillus cereus (strain ATCC 10987 / NRS 248).